The following is a 360-amino-acid chain: MLYALATGLSAIFTPLNALTYLTSRIILGALTALLLSIFCGGKMIRYLQKMQMGQFVRDDGPKTHLKKAGTPTMGGALIIFSITVSMLCWADLRSVYTWLALFVLLGFGAVGWTDDYLKLVKKNTKGLAAKQKYAYLSLVALLTALWLYFLADTPIETTLIMPFFKHFEWQMGILFIPFVYLVLTGASNAVNLTDGLDGLAIMPVVLVSGGLCIFAYLSGSANFALYLHIPAIAGAGEMAIFCAAIAGAGLGFLWYNAHPALVFMGDVGALSLGAALATVAVVVRQELAFAVMGGVFVAEALSVMIQVGSYKCRGKRVFRMAPLHHHFELGGWPESRVTIRFWIITVVLVLVGLSTLKLR.

The next 10 membrane-spanning stretches (helical) occupy residues leucine 19 to phenylalanine 39, threonine 73 to leucine 93, serine 95 to aspartate 115, tyrosine 136 to isoleucine 156, glycine 173 to leucine 193, glycine 199 to serine 219, isoleucine 233 to phenylalanine 253, valine 263 to valine 283, leucine 288 to valine 308, and valine 338 to lysine 358.

Belongs to the glycosyltransferase 4 family. MraY subfamily. The cofactor is Mg(2+).

Its subcellular location is the cell inner membrane. It carries out the reaction UDP-N-acetyl-alpha-D-muramoyl-L-alanyl-gamma-D-glutamyl-meso-2,6-diaminopimeloyl-D-alanyl-D-alanine + di-trans,octa-cis-undecaprenyl phosphate = di-trans,octa-cis-undecaprenyl diphospho-N-acetyl-alpha-D-muramoyl-L-alanyl-D-glutamyl-meso-2,6-diaminopimeloyl-D-alanyl-D-alanine + UMP. It participates in cell wall biogenesis; peptidoglycan biosynthesis. Its function is as follows. Catalyzes the initial step of the lipid cycle reactions in the biosynthesis of the cell wall peptidoglycan: transfers peptidoglycan precursor phospho-MurNAc-pentapeptide from UDP-MurNAc-pentapeptide onto the lipid carrier undecaprenyl phosphate, yielding undecaprenyl-pyrophosphoryl-MurNAc-pentapeptide, known as lipid I. This chain is Phospho-N-acetylmuramoyl-pentapeptide-transferase, found in Dichelobacter nodosus (strain VCS1703A).